The chain runs to 216 residues: Probable nicotinate-nucleotide adenylyltransferase (216 aa).

It belongs to the NadD family.

The enzyme catalyses nicotinate beta-D-ribonucleotide + ATP + H(+) = deamido-NAD(+) + diphosphate. It functions in the pathway cofactor biosynthesis; NAD(+) biosynthesis; deamido-NAD(+) from nicotinate D-ribonucleotide: step 1/1. Functionally, catalyzes the reversible adenylation of nicotinate mononucleotide (NaMN) to nicotinic acid adenine dinucleotide (NaAD). This Geobacter metallireducens (strain ATCC 53774 / DSM 7210 / GS-15) protein is Probable nicotinate-nucleotide adenylyltransferase.